The following is a 512-amino-acid chain: MEALPTYLESFWHSGGGTMGISILVMLSTFLALGTIFVYRIWLHPLSGFPGPKCCSVSSIPVAWAQLRGRNHEFVSSLHRKYGSVVRISPSELSFISGAAWNDIYSRSKGRPALERDRTFFNDMLVDPETITMANEATHSRIRRAMAPAFSPRALLEQEPIIQANIKLLMDKLEARAGSGGAPTDLRAWFNYTTFDLIGDLAFGESFGCLATSTCHEWVQFVLDHFYTSTLLHVVHRFHPFNRVLAALLPKSLIEKRKAHDSMTLTKVHRRLEVQGRRNDFTQHLLDAAEAGTLSSREVEKQASVLILAGSETTSVALTFAIYLVLTNKPVLDQLNDELHSTFKEEQEINLLSVNQLKYLHAVIQEALRFCPPISNGFPRQTPPQGATVDGMFIPGKTVVNINHWAAYRSPRNFTLPEQFLPERWLGDPRFDEDAKDVFQPFSVGPRNCIGKKFAYDSMKLILAKFLWRFKPTLLDKSRSWLAHQPTFVSFHQPPLLVDLEIKGSDAFPVRE.

The chain crosses the membrane as a helical span at residues 19-39 (MGISILVMLSTFLALGTIFVY). Asn-191 and Asn-413 each carry an N-linked (GlcNAc...) asparagine glycan. Cys-449 is a heme binding site.

It belongs to the cytochrome P450 family. The cofactor is heme.

Its subcellular location is the membrane. It functions in the pathway secondary metabolite biosynthesis; terpenoid biosynthesis. Its function is as follows. Cytochrome P450 monooxygenase; part of the gene cluster that mediates the biosynthesis of astellolides, drimane-type sesquiterpene esters that show antimicrobial, anti-inflammatory, and anti-tumor activities. The first step in astellolide biosynthesis is performed by the sesquiterpene cyclase astC that catalyzes the formation of drimanyl pyrophosphate from farnesyl pyrophosphate. Drimanyl pyrophosphate is then dephosphorylated by the sesquiterpene phosphatase astI to produce drimanyl monophosphate which is further dephosphorylated to drim-8-ene-11-ol by atsK. Drim-8-ene-11-ol is converted to confertifolin, probably by the cytochrome P450 monooxygenase astD and/or the dehydrogenase astE. The cytochrome P450 monooxygenases astB, astF and astJ then hydroxylate confertifolin at C6, C14, or C15 to form trihydroxy confertifolin. The nonribosomal peptide synthetase astA catalyzes ester bond formation between trihydroxy contifolin and benzoic acid (BA) or 4-hydroxy benzoic acid (4HBA), leading to the formation of dideacetyl astellolides A and B, respectively. Finally, the O-acetyltransferase astG converts dideacetyl astellolides A and B into deacetyl astellolides A and B. This Aspergillus oryzae (strain ATCC 42149 / RIB 40) (Yellow koji mold) protein is Cytochrome P450 monooxygenase astD.